Reading from the N-terminus, the 191-residue chain is Dephospho-CoA kinase (191 aa).

One can recognise a DPCK domain in the interval 3–191; it reads AIGITGSYAS…NLIANLECRV (189 aa). 11–16 is an ATP binding site; the sequence is ASGKTF.

This sequence belongs to the CoaE family.

The protein localises to the cytoplasm. It carries out the reaction 3'-dephospho-CoA + ATP = ADP + CoA + H(+). Its pathway is cofactor biosynthesis; coenzyme A biosynthesis; CoA from (R)-pantothenate: step 5/5. Its function is as follows. Catalyzes the phosphorylation of the 3'-hydroxyl group of dephosphocoenzyme A to form coenzyme A. In Rickettsia bellii (strain RML369-C), this protein is Dephospho-CoA kinase.